The primary structure comprises 234 residues: MQAIDIGHVTLERDGTGVFSDLTLRLTERRIGIVGRNGAGKSSLIRLITGLVTPQKGRVVVNGVDVAADRAGALGTVGLLFQNPDHQIIFPVVRDEIAFGLEQKGLKRAAALARAEAVLAAQGRADWGDRLCHTLSQGQRQLLCLMSILAMEPDWILFDEPFNALDLPTALSIEARIAGLAQNVVLVTHDPSRLTGFDRILWLEGGRIEADGPPAEVLPRYIAAMQALARAGAC.

In terms of domain architecture, ABC transporter spans 1–230; it reads MQAIDIGHVT…YIAAMQALAR (230 aa). Residue 35–42 coordinates ATP; sequence GRNGAGKS.

This sequence belongs to the ABC transporter superfamily. In terms of assembly, part of a biotin transporter holocomplex composed of BioM, BioN and BioY. BioMN complexes can be readily purified, but not BioMY complexes. Only the BioMNY complex has ATPase activity.

It is found in the cell inner membrane. In terms of biological role, required for biotin uptake under very low (pM) biotin concentrations but not under higher (nM) concentrations. This Rhodobacter capsulatus (strain ATCC BAA-309 / NBRC 16581 / SB1003) protein is Biotin transport ATP-binding protein BioM (bioM).